The sequence spans 496 residues: Docking protein 3 (496 aa).

A disordered region spans residues Leu-18–Ser-38. The 117-residue stretch at Pro-63–Phe-179 folds into the PH domain. A Phosphoserine modification is found at Ser-194. In terms of domain architecture, IRS-type PTB spans Glu-213–Leu-317. Residues Arg-313–Gln-363 are disordered. A phosphoserine mark is found at Ser-330 and Ser-364. Phosphotyrosine is present on Tyr-381. Residues Pro-408–Ser-447 are disordered. The residue at position 425 (Ser-425) is a Phosphoserine.

The protein belongs to the DOK family. Type A subfamily. As to quaternary structure, on tyrosine phosphorylation, interacts with CSK and INPP5D/SHIP1 via their SH2 domains. Both Tyr-381 and Tyr-398 are required for interaction with INPP5D. Only Tyr-381 is required for interaction with CSK. Binds ABL1 through the PTB domain and in a kinase-dependent manner. Does not interact with RasGAP. Constitutively tyrosine-phosphorylated. Post-translationally, on IL2 stimulation, phosphorylated on C-terminal tyrosine residues possibly by Src kinases. Can also be phosphorylated by ABL1 kinase. In terms of tissue distribution, expressed in spleen.

It localises to the cytoplasm. It is found in the cell membrane. Functionally, DOK proteins are enzymatically inert adaptor or scaffolding proteins. They provide a docking platform for the assembly of multimolecular signaling complexes. DOK3 is a negative regulator of JNK signaling in B-cells through interaction with INPP5D/SHIP1. May modulate ABL1 function. This chain is Docking protein 3 (DOK3), found in Homo sapiens (Human).